We begin with the raw amino-acid sequence, 300 residues long: GTPase Era (300 aa).

The region spanning 7–175 is the Era-type G domain; sequence YCGFIAIVGR…EKFVRESLKE (169 aa). Residues 15–22 form a G1 region; that stretch reads GRPNVGKS. 15–22 is a binding site for GTP; the sequence is GRPNVGKS. Residues 41 to 45 are G2; that stretch reads QTTRH. Residues 62 to 65 form a G3 region; that stretch reads DTPG. GTP is bound by residues 62-66 and 124-127; these read DTPGL and NKVD. A G4 region spans residues 124–127; the sequence is NKVD. The segment at 154–156 is G5; sequence ISA. One can recognise a KH type-2 domain in the interval 206 to 283; that stretch reads MGEELPYSVT…HLELWVKVKA (78 aa).

It belongs to the TRAFAC class TrmE-Era-EngA-EngB-Septin-like GTPase superfamily. Era GTPase family. In terms of assembly, monomer.

It is found in the cytoplasm. Its subcellular location is the cell inner membrane. In terms of biological role, an essential GTPase that binds both GDP and GTP, with rapid nucleotide exchange. Plays a role in 16S rRNA processing and 30S ribosomal subunit biogenesis and possibly also in cell cycle regulation and energy metabolism. In Glaesserella parasuis serovar 5 (strain SH0165) (Haemophilus parasuis), this protein is GTPase Era.